Here is a 94-residue protein sequence, read N- to C-terminus: Large ribosomal subunit protein uL23 (94 aa).

Belongs to the universal ribosomal protein uL23 family. Part of the 50S ribosomal subunit. Contacts protein L29, and trigger factor when it is bound to the ribosome.

In terms of biological role, one of the early assembly proteins it binds 23S rRNA. One of the proteins that surrounds the polypeptide exit tunnel on the outside of the ribosome. Forms the main docking site for trigger factor binding to the ribosome. The chain is Large ribosomal subunit protein uL23 from Listeria monocytogenes serotype 4b (strain CLIP80459).